The chain runs to 194 residues: Peptidyl-tRNA hydrolase (194 aa).

Residue Y17 coordinates tRNA. Catalysis depends on H22, which acts as the Proton acceptor. TRNA is bound by residues Y68, N70, and N116.

It belongs to the PTH family. As to quaternary structure, monomer.

The protein resides in the cytoplasm. It carries out the reaction an N-acyl-L-alpha-aminoacyl-tRNA + H2O = an N-acyl-L-amino acid + a tRNA + H(+). In terms of biological role, hydrolyzes ribosome-free peptidyl-tRNAs (with 1 or more amino acids incorporated), which drop off the ribosome during protein synthesis, or as a result of ribosome stalling. Functionally, catalyzes the release of premature peptidyl moieties from peptidyl-tRNA molecules trapped in stalled 50S ribosomal subunits, and thus maintains levels of free tRNAs and 50S ribosomes. The protein is Peptidyl-tRNA hydrolase of Chromohalobacter salexigens (strain ATCC BAA-138 / DSM 3043 / CIP 106854 / NCIMB 13768 / 1H11).